The following is a 298-amino-acid chain: Thymidylate synthase (298 aa).

DUMP contacts are provided by residues R25 and 159-160 (RR). The active-site Nucleophile is C179. DUMP-binding positions include 200–203 (RSCD), N211, and 241–243 (HLY). D203 contacts (6R)-5,10-methylene-5,6,7,8-tetrahydrofolate. A (6R)-5,10-methylene-5,6,7,8-tetrahydrofolate-binding site is contributed by A297.

It belongs to the thymidylate synthase family. Bacterial-type ThyA subfamily. As to quaternary structure, homodimer.

The protein localises to the cytoplasm. It carries out the reaction dUMP + (6R)-5,10-methylene-5,6,7,8-tetrahydrofolate = 7,8-dihydrofolate + dTMP. Its pathway is pyrimidine metabolism; dTTP biosynthesis. In terms of biological role, catalyzes the reductive methylation of 2'-deoxyuridine-5'-monophosphate (dUMP) to 2'-deoxythymidine-5'-monophosphate (dTMP) while utilizing 5,10-methylenetetrahydrofolate (mTHF) as the methyl donor and reductant in the reaction, yielding dihydrofolate (DHF) as a by-product. This enzymatic reaction provides an intracellular de novo source of dTMP, an essential precursor for DNA biosynthesis. The polypeptide is Thymidylate synthase (Rhodopseudomonas palustris (strain BisA53)).